Here is a 750-residue protein sequence, read N- to C-terminus: Polyribonucleotide nucleotidyltransferase (750 aa).

Mg(2+)-binding residues include aspartate 523 and aspartate 529. Residues 589–648 (PRVTSISIPVDKIGEVIGPKGKMINSITEETGAEITIEDDGTIYVGAADGPSAEAAIDKI) enclose the KH domain. The region spanning 660-729 (GERFLGTVVK…SRGKISLVVV (70 aa)) is the S1 motif domain.

The protein belongs to the polyribonucleotide nucleotidyltransferase family. It depends on Mg(2+) as a cofactor.

It is found in the cytoplasm. It catalyses the reaction RNA(n+1) + phosphate = RNA(n) + a ribonucleoside 5'-diphosphate. In terms of biological role, involved in mRNA degradation. Catalyzes the phosphorolysis of single-stranded polyribonucleotides processively in the 3'- to 5'-direction. This chain is Polyribonucleotide nucleotidyltransferase, found in Saccharopolyspora erythraea (strain ATCC 11635 / DSM 40517 / JCM 4748 / NBRC 13426 / NCIMB 8594 / NRRL 2338).